Reading from the N-terminus, the 337-residue chain is Membrane-spanning 4-domains subfamily A member 18 (337 aa).

Positions Leu-101 to Pro-121 are disordered. A run of 4 helical transmembrane segments spans residues Leu-155–Leu-175, Ala-183–Val-203, Met-220–Ile-240, and Gly-252–Gly-272.

Belongs to the MS4A family.

Its subcellular location is the membrane. The sequence is that of Membrane-spanning 4-domains subfamily A member 18 (MS4A18) from Bos taurus (Bovine).